Here is a 425-residue protein sequence, read N- to C-terminus: E3 ubiquitin-protein ligase CBLL2 (425 aa).

Residues 57–97 (CDKCDLPIKIYGRIIPCKHAFCYHCANLYDKVGYKVCPRCR) form an RING-type zinc finger. The interval 96–154 (CRYPVLRIEAHKRGSVFMCSIVQQCKRTYLSQKSLQAHIKRRHKRARKQVTSASLEKVR) is HYB domain. Residues 112-138 (FMCSIVQQCKRTYLSQKSLQAHIKRRH) form a C2H2-type zinc finger. Disordered stretches follow at residues 241 to 297 (DHIQ…HQMP) and 382 to 425 (TDAM…HRRY). Over residues 398–408 (PCPPTRSPPPS) the composition is skewed to pro residues. The segment covering 412-425 (GRSHHSHQRRHRRY) has biased composition (basic residues).

As to quaternary structure, homodimer. Exclusively expressed in testis and sperm, including spermatocytes, round and elongated spermatids, and Leydig cells.

It is found in the cytoplasm. The catalysed reaction is S-ubiquitinyl-[E2 ubiquitin-conjugating enzyme]-L-cysteine + [acceptor protein]-L-lysine = [E2 ubiquitin-conjugating enzyme]-L-cysteine + N(6)-ubiquitinyl-[acceptor protein]-L-lysine.. Its pathway is protein modification; protein ubiquitination. In terms of biological role, E3 ubiquitin ligase catalyzing the covalent attachment of ubiquitin moieties onto substrate proteins. May operate on tyrosine-phosphorylated SRC substrates. The sequence is that of E3 ubiquitin-protein ligase CBLL2 from Homo sapiens (Human).